A 299-amino-acid polypeptide reads, in one-letter code: Nitrogenase iron protein (299 aa).

11 to 18 is a binding site for ATP; sequence GKGGIGKS. C99 lines the [4Fe-4S] cluster pocket. R102 bears the ADP-ribosylarginine; by dinitrogenase reductase ADP-ribosyltransferase mark. Position 133 (C133) interacts with [4Fe-4S] cluster.

The protein belongs to the NifH/BchL/ChlL family. In terms of assembly, homodimer. [4Fe-4S] cluster serves as cofactor. The reversible ADP-ribosylation of Arg-102 inactivates the nitrogenase reductase and regulates nitrogenase activity.

It carries out the reaction N2 + 8 reduced [2Fe-2S]-[ferredoxin] + 16 ATP + 16 H2O = H2 + 8 oxidized [2Fe-2S]-[ferredoxin] + 2 NH4(+) + 16 ADP + 16 phosphate + 6 H(+). In terms of biological role, the key enzymatic reactions in nitrogen fixation are catalyzed by the nitrogenase complex, which has 2 components: the iron protein and the molybdenum-iron protein. This Rhodopseudomonas palustris (strain BisB5) protein is Nitrogenase iron protein.